The sequence spans 255 residues: tRNA (guanine-N(7)-)-methyltransferase (255 aa).

The segment at 1-30 is disordered; it reads MMHDDPNEAGLPPDDAALPDEAADGADEVN. Acidic residues predominate over residues 17–27; sequence ALPDEAADGAD. Residues glutamate 86, glutamate 111, aspartate 138, and aspartate 161 each contribute to the S-adenosyl-L-methionine site. Residue aspartate 161 is part of the active site. Residues lysine 165, aspartate 197, and 232–235 each bind substrate; that span reads TKFE.

Belongs to the class I-like SAM-binding methyltransferase superfamily. TrmB family.

The catalysed reaction is guanosine(46) in tRNA + S-adenosyl-L-methionine = N(7)-methylguanosine(46) in tRNA + S-adenosyl-L-homocysteine. Its pathway is tRNA modification; N(7)-methylguanine-tRNA biosynthesis. Its function is as follows. Catalyzes the formation of N(7)-methylguanine at position 46 (m7G46) in tRNA. This Burkholderia vietnamiensis (strain G4 / LMG 22486) (Burkholderia cepacia (strain R1808)) protein is tRNA (guanine-N(7)-)-methyltransferase.